We begin with the raw amino-acid sequence, 247 residues long: Suppressor of silencing P0 (247 aa).

The F-box-like domain maps to 76 to 95; sequence LPRHLHYECLEWGLLCGTHP.

This sequence belongs to the polerovirus P0 protein family.

Its function is as follows. Suppressor of RNA-mediated gene silencing, also known as post-transcriptional gene silencing (PTGS), a mechanism of plant viral defense that limits the accumulation of viral RNAs. The P0 protein suppresses local PTGS using its F-box-like domain to mediate destabilization and degradation of the AGO1 protein, although not via an interaction with host SKP1A. Participates, together with the proteins P1 and P7, in the inhibition of the induction of aphid-induced host phytohormones. This could play a role in the attraction to the infected plants by aphids. This Potato leafroll virus (strain Potato/Scotland/strain 1/1984) (PLrV) protein is Suppressor of silencing P0.